The primary structure comprises 134 residues: Interleukin-5 (134 aa).

The first 19 residues, 1–19 (MRMLLHLSLLALGASYMYA), serve as a signal peptide directing secretion. Threonine 22 carries O-linked (GalNAc...) threonine glycosylation. N-linked (GlcNAc...) asparagine glycosylation is found at asparagine 47 and asparagine 90.

This sequence belongs to the IL-5 family. Homodimer; disulfide-linked. Interacts with IL5RA. Interacts with CSF2RB.

The protein resides in the secreted. Its function is as follows. Homodimeric cytokine expressed predominantly by T-lymphocytes and NK cells that plays an important role in the survival, differentiation, and chemotaxis of eosinophils. Also acts on activated and resting B-cells to induce immunoglobulin production, growth, and differentiation. Mechanistically, exerts its biological effects through a receptor composed of IL5RA subunit and the cytokine receptor common subunit beta/CSF2RB. Binding to the receptor leads to activation of various kinases including LYN, SYK and JAK2 and thereby propagates signals through the RAS-MAPK and JAK-STAT5 pathways respectively. The chain is Interleukin-5 (IL5) from Cercocebus atys (Sooty mangabey).